A 252-amino-acid chain; its full sequence is MLAKRIIPCLDVADGRVKKGVNFVNLTDVGDPVAIAAAYQQQGADELVFLDIAATNEHRETMAAMVEQVSAQVFMPLTIGGGITSVADMQRILRAGADKTAINSAAVANPELIRAGAEKFGNQCIVVAIDAAWDAAAGQYRVYTHGGQQATDLDAVAWAKQAVALGAGELLVTSMDRDGTKAGFDTKLYQALGATVNVPIIASGGAGNLQDFVDVFSTTPVDGALAASVFHFGELTIADVKATLRKQGVVVR.

Catalysis depends on residues aspartate 11 and aspartate 130.

The protein belongs to the HisA/HisF family. As to quaternary structure, heterodimer of HisH and HisF.

It is found in the cytoplasm. The enzyme catalyses 5-[(5-phospho-1-deoxy-D-ribulos-1-ylimino)methylamino]-1-(5-phospho-beta-D-ribosyl)imidazole-4-carboxamide + L-glutamine = D-erythro-1-(imidazol-4-yl)glycerol 3-phosphate + 5-amino-1-(5-phospho-beta-D-ribosyl)imidazole-4-carboxamide + L-glutamate + H(+). The protein operates within amino-acid biosynthesis; L-histidine biosynthesis; L-histidine from 5-phospho-alpha-D-ribose 1-diphosphate: step 5/9. In terms of biological role, IGPS catalyzes the conversion of PRFAR and glutamine to IGP, AICAR and glutamate. The HisF subunit catalyzes the cyclization activity that produces IGP and AICAR from PRFAR using the ammonia provided by the HisH subunit. The polypeptide is Imidazole glycerol phosphate synthase subunit HisF (Lactiplantibacillus plantarum (strain ATCC BAA-793 / NCIMB 8826 / WCFS1) (Lactobacillus plantarum)).